The chain runs to 1746 residues: Non-reducing polyketide synthase ptaA (1746 aa).

The interval 4–227 is N-terminal acylcarrier protein transacylase domain (SAT); sequence NSGSGTSPWG…ALPVYGGLCH (224 aa). The 436-residue stretch at 361 to 796 folds into the Ketosynthase family 3 (KS3) domain; it reads QSKIAIVGMS…GGNTTIAIEE (436 aa). Catalysis depends on for beta-ketoacyl synthase activity residues Cys-534, His-670, and His-714. Positions 898-1218 are malonyl-CoA:ACP transacylase (MAT) domain; the sequence is FAFTGQGASY…LGALHLAGIP (321 aa). The interval 1286–1605 is product template (PT) domain; sequence TSTVHRVIGE…RLLLDRFFSA (320 aa). The segment at 1290–1425 is N-terminal hotdog fold; it reads HRVIGETFDG…ATLFYGKAND (136 aa). The PKS/mFAS DH domain occupies 1290–1600; the sequence is HRVIGETFDG…FRRYPRLLLD (311 aa). The active-site Proton acceptor; for dehydratase activity is the His-1322. Residues 1452–1600 are C-terminal hotdog fold; the sequence is VANRFSRNMA…FRRYPRLLLD (149 aa). Asp-1511 acts as the Proton donor; for dehydratase activity in catalysis. One can recognise a Carrier domain in the interval 1671–1745; it reads DSITVKAMAL…DLRAWLLEYY (75 aa). The residue at position 1705 (Ser-1705) is an O-(pantetheine 4'-phosphoryl)serine.

It carries out the reaction holo-[ACP] + 8 malonyl-CoA + 8 H(+) = atrochrysone carboxyl-[ACP] + 8 CO2 + 8 CoA + 2 H2O. It participates in secondary metabolite biosynthesis. Functionally, non-reducing polyketide synthase; part of the gene cluster that mediates the biosynthesis of pestheic acid, a diphenyl ether which is a biosynthetic precursor of the unique chloropupukeananes. The biosynthesis initiates from condensation of acetate and malonate units catalyzed by the non-reducing PKS ptaA. As the ptaA protein is TE/CLC domain-deficient, hydrolysis and Claisen cyclization of the polyketide could be catalyzed by ptaB containing a beta-lactamase domain. The ptaB protein might hydrolyze the thioester bond between the ACP of ptaA and the intermediate to release atrochrysone carboxylic acid, which is spontaneously dehydrated to form endocrocin anthrone. Endocrocin anthrone is then converted to endocrocin, catalyzed by the anthrone oxygenase ptaC. Spontaneous decarboxylation of endocrocin occurs to generate emodin. An O-methyltransferase (ptaH or ptaI) could methylate emodin to form physcion. PtaJ could then catalyze the oxidative cleavage of physcion, and rotation of the intermediate could then afford desmethylisosulochrin. PtaF, a putative NADH-dependent oxidoreductase, might also participate in the oxidative cleavage step. Desmethylisosulochrin is then transformed by another O-methyltransferase (ptaH or ptaI) to form isosulochrin. Chlorination of isosulochrin by ptaM in the cyclohexadienone B ring then produces chloroisosulochrin. PtaE is responsible for the oxidative coupling reactions of both benzophenones isosulochrin and chloroisosulochrin to RES-1214-1 and pestheic acid respectively, regardless of chlorination. This Pestalotiopsis fici (strain W106-1 / CGMCC3.15140) protein is Non-reducing polyketide synthase ptaA.